We begin with the raw amino-acid sequence, 493 residues long: DM7 family protein GM11958 (493 aa).

Positions 434 to 493 (ATKSTDTRDDGMNTADYQSQFPELEQDSEPEPEPEPEPQTEDEGEDEDIEILASLCSGSI) are disordered. Acidic residues predominate over residues 457-483 (LEQDSEPEPEPEPEPQTEDEGEDEDIE).

The protein belongs to the DM7 family.

The chain is DM7 family protein GM11958 from Drosophila sechellia (Fruit fly).